The following is a 398-amino-acid chain: Ornithine aminotransferase (398 aa).

At Lys256 the chain carries N6-(pyridoxal phosphate)lysine.

This sequence belongs to the class-III pyridoxal-phosphate-dependent aminotransferase family. OAT subfamily. Pyridoxal 5'-phosphate serves as cofactor.

The protein localises to the cytoplasm. It carries out the reaction a 2-oxocarboxylate + L-ornithine = L-glutamate 5-semialdehyde + an L-alpha-amino acid. It functions in the pathway amino-acid biosynthesis; L-proline biosynthesis; L-glutamate 5-semialdehyde from L-ornithine: step 1/1. Catalyzes the interconversion of ornithine to glutamate semialdehyde. The sequence is that of Ornithine aminotransferase from Oceanobacillus iheyensis (strain DSM 14371 / CIP 107618 / JCM 11309 / KCTC 3954 / HTE831).